Reading from the N-terminus, the 543-residue chain is Probable protein kinase UbiB (543 aa).

Residues 123 to 500 (DFDQQPLASA…HRRHAQARFL (378 aa)) enclose the Protein kinase domain. Residues 129-137 (LASASVAQV) and lysine 152 each bind ATP. Catalysis depends on aspartate 286, which acts as the Proton acceptor. The next 2 helical transmembrane spans lie at 499–519 (FLLG…PTHE) and 521–541 (LASA…WKIS).

The protein belongs to the ABC1 family. UbiB subfamily.

It is found in the cell inner membrane. It participates in cofactor biosynthesis; ubiquinone biosynthesis [regulation]. In terms of biological role, is probably a protein kinase regulator of UbiI activity which is involved in aerobic coenzyme Q (ubiquinone) biosynthesis. The polypeptide is Probable protein kinase UbiB (Tolumonas auensis (strain DSM 9187 / NBRC 110442 / TA 4)).